Consider the following 142-residue polypeptide: GLTAADKTLIKSIWGKVEKETEAIGVEALVRLFKCFPQSKVYFDHFTDLSPSSQKLHAHAKVVLGALTKAVNHLDNITDTLHDISLVHAKKLLVDPVNFELLGHCLEVALAAHFATDFTPEVHLAIDKFLYEVEKALFETYR.

The region spanning 1 to 142 is the Globin domain; that stretch reads GLTAADKTLI…VEKALFETYR (142 aa). His-59 is an O2 binding site. His-88 serves as a coordination point for heme b.

The protein belongs to the globin family. In terms of assembly, heterotetramer of two alpha chains and two beta chains (an easy dimerization is also reported). As to expression, red blood cells.

In terms of biological role, involved in oxygen transport from the lung to the various peripheral tissues. In Latimeria chalumnae (Coelacanth), this protein is Hemoglobin subunit alpha (HBA).